The sequence spans 33 residues: Cecropin-B (33 aa).

Lysine 21 carries the 5-hydroxylysine modification.

In terms of assembly, monomer. In terms of tissue distribution, hemolymph.

The protein resides in the secreted. Functionally, cecropins have lytic and antibacterial activity against several Gram-positive and Gram-negative bacteria. Also has activity against fungi. The protein is Cecropin-B of Heliothis virescens (Tobacco budworm moth).